Here is a 303-residue protein sequence, read N- to C-terminus: Nod factor export ATP-binding protein I (303 aa).

In terms of domain architecture, ABC transporter spans 5-235 (LQMRNVRKLY…EIGCDVVEVY (231 aa)). ATP is bound at residue 37–44 (GPNGAGKT).

Belongs to the ABC transporter superfamily. Lipooligosaccharide exporter (TC 3.A.1.102) family. As to quaternary structure, the complex is composed of two ATP-binding proteins (NodI) and two transmembrane proteins (NodJ).

Its subcellular location is the cell inner membrane. Functionally, part of the ABC transporter complex NodIJ involved in the export of the nodulation factors (Nod factors), the bacterial signal molecules that induce symbiosis and subsequent nodulation induction. Nod factors are LCO (lipo-chitin oligosaccharide), a modified beta-1,4-linked N-acetylglucosamine oligosaccharide. This subunit is responsible for energy coupling to the transport system. The chain is Nod factor export ATP-binding protein I from Cupriavidus metallidurans (strain ATCC 43123 / DSM 2839 / NBRC 102507 / CH34) (Ralstonia metallidurans).